The following is a 147-amino-acid chain: Cytochrome c-type biogenesis protein CcmE (147 aa).

Topologically, residues 1–9 are cytoplasmic; that stretch reads MKSLKKQRR. Residues 10–30 traverse the membrane as a helical; Signal-anchor for type II membrane protein segment; sequence IQIIALATVALVGSTALIGYA. Residues 31 to 147 lie on the Periplasmic side of the membrane; the sequence is MRDGINYFRS…EQGVYREGDS (117 aa). Residues His123 and Tyr127 each contribute to the heme site.

The protein belongs to the CcmE/CycJ family.

The protein localises to the cell inner membrane. Heme chaperone required for the biogenesis of c-type cytochromes. Transiently binds heme delivered by CcmC and transfers the heme to apo-cytochromes in a process facilitated by CcmF and CcmH. The polypeptide is Cytochrome c-type biogenesis protein CcmE (Ruegeria sp. (strain TM1040) (Silicibacter sp.)).